The following is a 269-amino-acid chain: Phosphonoacetaldehyde hydrolase (269 aa).

Catalysis depends on Asp-9, which acts as the Nucleophile. Residues Asp-9 and Ala-11 each coordinate Mg(2+). The Schiff-base intermediate with substrate role is filled by Lys-50. Asp-184 serves as a coordination point for Mg(2+).

Belongs to the HAD-like hydrolase superfamily. PhnX family. In terms of assembly, homodimer. Mg(2+) is required as a cofactor.

It catalyses the reaction phosphonoacetaldehyde + H2O = acetaldehyde + phosphate + H(+). Functionally, involved in phosphonate degradation. The chain is Phosphonoacetaldehyde hydrolase from Lysinibacillus sphaericus (strain C3-41).